Reading from the N-terminus, the 653-residue chain is Probable potassium transport system protein Kup (653 aa).

12 consecutive transmembrane segments (helical) span residues 37 to 57 (ALLA…SPLY), 79 to 99 (VLSL…LLLV), 134 to 154 (ITLG…TPAI), 168 to 188 (AVFD…LFLV), 196 to 216 (IGAV…GLGV), 243 to 263 (LHGF…EALY), 278 to 298 (WFSM…ALLL), 320 to 340 (LVAL…AGVF), 368 to 388 (IYLP…VLGF), 397 to 417 (AYGI…YVVA), 426 to 446 (WVAI…FGAN), and 450 to 470 (VADG…LMTT).

It belongs to the HAK/KUP transporter (TC 2.A.72) family.

It is found in the cell inner membrane. It carries out the reaction K(+)(in) + H(+)(in) = K(+)(out) + H(+)(out). Transport of potassium into the cell. Likely operates as a K(+):H(+) symporter. The sequence is that of Probable potassium transport system protein Kup from Myxococcus xanthus (strain DK1622).